We begin with the raw amino-acid sequence, 747 residues long: DNA repair and recombination protein RAD54-like (747 aa).

Residues 1-41 (MRRSLAPSQLAKRKPEGRSCDDEDWQPGLVTPRKRKSSSET) are disordered. The required for chromatin remodeling, strand pairing activities and coupling of ATPase activity stretch occupies residues 2–9 (RRSLAPSQ). A Phosphoserine modification is found at serine 38. In terms of domain architecture, Helicase ATP-binding spans 170-345 (SRRIPGSHGC…FSLVHFVNSG (176 aa)). ATP is bound at residue 183–190 (DEMGLGKT). A DEGH box motif is present at residues 296-299 (DEGH). A Helicase C-terminal domain is found at 500–653 (VLDYILAVTR…CVVDEEQDVE (154 aa)). At lysine 515 the chain carries N6-acetyllysine. Serine 572 carries the post-translational modification Phosphoserine; by NEK1.

This sequence belongs to the SNF2/RAD54 helicase family. Homohexamer. Interacts (via N-terminus) with RAD51. Interacts with NAP1L1. Interacts with BRD9; this interaction orchestrates RAD51-RAD54 complex formation. Post-translationally, acetylated. Acetylation promotes interaction with BRD9, and subsequently with RAD54, which is essential for homologous recombination (HR). In terms of processing, phosphorylated. Phosphorylation at Ser-572 by NEK1 specifically in G2 phase allows efficient removal of RAD51 filaments from DNA.

It localises to the nucleus. The catalysed reaction is ATP + H2O = ADP + phosphate + H(+). In terms of biological role, plays an essential role in homologous recombination (HR) which is a major pathway for repairing DNA double-strand breaks (DSBs), single-stranded DNA (ssDNA) gaps, and stalled or collapsed replication forks. Acts as a molecular motor during the homology search and guides RAD51 ssDNA along a donor dsDNA thereby changing the homology search from the diffusion-based mechanism to a motor-guided mechanism. Also plays an essential role in RAD51-mediated synaptic complex formation which consists of three strands encased in a protein filament formed once homology is recognized. Once DNA strand exchange occured, dissociates RAD51 from nucleoprotein filaments formed on dsDNA. This is DNA repair and recombination protein RAD54-like (RAD54L) from Homo sapiens (Human).